A 206-amino-acid chain; its full sequence is Transmembrane emp24 domain-containing protein bai (206 aa).

The signal sequence occupies residues 1-20; it reads MLKVLYVIFTIFGYIWPIYS. The Lumenal portion of the chain corresponds to 21 to 172; the sequence is VMFHLTPNTQ…RDTNEKTNSR (152 aa). Residues 30–140 enclose the GOLD domain; it reads QKCLKEDIQA…LKPLEVDLKR (111 aa). Residues 173 to 193 form a helical membrane-spanning segment; sequence VLFFSIFSMCCLLGLATWQVL. The Cytoplasmic segment spans residues 194-206; that stretch reads YLRRYFKAKKLIE.

Belongs to the EMP24/GP25L family.

Its subcellular location is the membrane. Functionally, eca and bai are essential, though not redundant, for dorsoventral patterning of the embryo. Specifically required during early embryogenesis for the activity of maternal tkv, while the zygotic tkv is not affected. The polypeptide is Transmembrane emp24 domain-containing protein bai (Drosophila virilis (Fruit fly)).